A 481-amino-acid polypeptide reads, in one-letter code: Protein hedgehog (481 aa).

C93 is lipidated: N-palmitoyl cysteine. Ca(2+) contacts are provided by E157, E158, D163, T193, E194, D197, and D199. G265 carries Cholesterol glycine ester lipidation.

The protein belongs to the hedgehog family. Interacts with shf. The C-terminal part of the hedgehog protein precursor displays an autoproteolysis activity that results in the cleavage of the full-length protein into two parts (N-product and C-product). In addition, the C-terminal part displays a cholesterol transferase activity that results by the covalent attachment of a cholesterol moiety to the C-terminal of the newly generated N-product. The N-product is the active species in both local and long-range signaling, whereas the C-product has no signaling activity. Post-translationally, cholesterylation is required for N-product targeting to lipid rafts and multimerization. In terms of processing, N-palmitoylation by Rasp of the hedgehog N-product, within the secretory pathway, is required for the embryonic and larval patterning activities of the hedgehog signal.

It is found in the nucleus. Its subcellular location is the cytoplasm. The protein resides in the cell membrane. It catalyses the reaction glycyl-L-cysteinyl-[protein] + cholesterol + H(+) = [protein]-C-terminal glycyl cholesterol ester + N-terminal L-cysteinyl-[protein]. Its function is as follows. The C-terminal part of the hedgehog protein precursor displays an autoproteolysis activity that results in the cleavage of the full-length protein into two parts (N-product and C-product). In addition, the C-terminal part displays a cholesterol transferase activity that results by the covalent attachment of a cholesterol moiety to the C-terminal of the newly generated N-product. Once cleaved, the C-product has no signaling activity and diffuses from the cell. In terms of biological role, the dually lipidated hedgehog protein N-product is a morphogen which is essential for a variety of patterning events during development. Establishes the anterior-posterior axis of the embryonic segments and patterns the larval imaginal disks. Binds to the patched (ptc) receptor, which functions in association with smoothened (smo), to activate the transcription of target genes wingless (wg), decapentaplegic (dpp) and ptc. In the absence of hh, ptc represses the constitutive signaling activity of smo through fused (fu). Essential component of a signaling pathway which regulates the Duox-dependent gut immune response to bacterial uracil; required to activate Cad99C-dependent endosome formation, norpA-dependent Ca2+ mobilization and p38 MAPK, which are essential steps in the Duox-dependent production of reactive oxygen species (ROS) in response to intestinal bacterial infection. During photoreceptor differentiation, it up-regulates transcription of Ubr3, which in turn promotes the hh-signaling pathway by mediating the ubiquitination and degradation of cos. The sequence is that of Protein hedgehog (hh-1) from Drosophila pseudoobscura pseudoobscura (Fruit fly).